Consider the following 406-residue polypeptide: Lymphocyte transmembrane adapter 1 (406 aa).

The interval 1-25 (MYTTPAPPEITRRSSEPSTQQGTLG) is disordered. The Extracellular segment spans residues 1–33 (MYTTPAPPEITRRSSEPSTQQGTLGSLEGEKGH). The helical; Signal-anchor for type III membrane protein transmembrane segment at 34–54 (LLFPGFVVLVTIFLVVIVTCI) threads the bilayer. The Cytoplasmic segment spans residues 55–406 (LWSRKKQKKR…LATETSGEEV (352 aa)). The interval 109 to 131 (ESLLSRASDSPEPEVPQASGSLQ) is disordered. Position 184 is a phosphotyrosine (Y184). Residues 219-258 (AEGGHAGCGKATDRTGVWAPGLQGSNSLSEGDDSSQSSND) are disordered. Residues 242 to 258 (GSNSLSEGDDSSQSSND) show a composition bias toward low complexity. Phosphotyrosine is present on residues Y259, Y285, and Y352. The segment at 358-406 (PELEGKDWKQGPGTWHPSDERTPSDQAGKFCEAVYPAGSLATETSGEEV) is disordered.

In terms of assembly, when phosphorylated, interacts with GRB2, PIK3R1 and GRAP2. In terms of processing, phosphorylated on tyrosines upon TCR or BCR activation; which leads to the recruitment of GRB2, PIK3R1 and GRAP2.

The protein resides in the cell membrane. In terms of biological role, negatively regulates TCR (T-cell antigen receptor)-mediated signaling in T-cells and BCR (B-cell antigen receptor)-mediated signaling in B-cells. The protein is Lymphocyte transmembrane adapter 1 (Lax1) of Rattus norvegicus (Rat).